Consider the following 99-residue polypeptide: Acylphosphatase-1 (99 aa).

The residue at position 2 (A2) is an N-acetylalanine. The region spanning 9–99 (SVDYEIFGKV…LDYSDFQIVK (91 aa)) is the Acylphosphatase-like domain. Catalysis depends on residues R24 and N42.

This sequence belongs to the acylphosphatase family. As to expression, organ-common type isozyme is found in many different tissues.

The catalysed reaction is an acyl phosphate + H2O = a carboxylate + phosphate + H(+). The chain is Acylphosphatase-1 (ACYP1) from Homo sapiens (Human).